Consider the following 639-residue polypeptide: DNA gyrase subunit B (639 aa).

Over residues 392–402 (QAEELTRRKSA) the composition is skewed to basic and acidic residues. The interval 392 to 416 (QAEELTRRKSALESTSLPGKLADCQ) is disordered. A Toprim domain is found at 423–537 (SELFIVEGDS…AGYVYAAQPP (115 aa)). Glu-429, Asp-502, and Asp-504 together coordinate Mg(2+). Residue Lys-624 forms a Glycyl lysine isopeptide (Lys-Gly) (interchain with G-Cter in SAMP2) linkage.

Belongs to the type II topoisomerase GyrB family. In terms of assembly, heterotetramer, composed of two GyrA and two GyrB chains. In the heterotetramer, GyrA contains the active site tyrosine that forms a transient covalent intermediate with DNA, while GyrB binds cofactors and catalyzes ATP hydrolysis. Requires Mg(2+) as cofactor. The cofactor is Mn(2+). Ca(2+) is required as a cofactor.

Its subcellular location is the cytoplasm. The catalysed reaction is ATP-dependent breakage, passage and rejoining of double-stranded DNA.. In terms of biological role, a type II topoisomerase that negatively supercoils closed circular double-stranded (ds) DNA in an ATP-dependent manner to modulate DNA topology and maintain chromosomes in an underwound state. Negative supercoiling favors strand separation, and DNA replication, transcription, recombination and repair, all of which involve strand separation. Also able to catalyze the interconversion of other topological isomers of dsDNA rings, including catenanes and knotted rings. Type II topoisomerases break and join 2 DNA strands simultaneously in an ATP-dependent manner. This Haloferax volcanii (strain ATCC 29605 / DSM 3757 / JCM 8879 / NBRC 14742 / NCIMB 2012 / VKM B-1768 / DS2) (Halobacterium volcanii) protein is DNA gyrase subunit B.